The following is a 186-amino-acid chain: Small ribosomal subunit protein uS5 (186 aa).

The S5 DRBM domain occupies 20–83 (FVDKLVHINR…EAAKRDMIFV (64 aa)).

Belongs to the universal ribosomal protein uS5 family. Part of the 30S ribosomal subunit. Contacts proteins S4 and S8.

With S4 and S12 plays an important role in translational accuracy. In terms of biological role, located at the back of the 30S subunit body where it stabilizes the conformation of the head with respect to the body. The polypeptide is Small ribosomal subunit protein uS5 (Brucella ovis (strain ATCC 25840 / 63/290 / NCTC 10512)).